Here is a 100-residue protein sequence, read N- to C-terminus: UPF0251 protein VV2_0946 (100 aa).

It belongs to the UPF0251 family.

The sequence is that of UPF0251 protein VV2_0946 from Vibrio vulnificus (strain CMCP6).